A 398-amino-acid polypeptide reads, in one-letter code: Succinate--CoA ligase [ADP-forming] subunit beta (398 aa).

Residues 9–254 (KRLLHEYGAP…LSEEDPKEIE (246 aa)) enclose the ATP-grasp domain. ATP-binding positions include Lys-46, 53–55 (GRG), Glu-109, Ala-112, and Glu-117. Residues Asn-209 and Asp-223 each contribute to the Mg(2+) site. Substrate contacts are provided by residues Asn-274 and 331 to 333 (GIM).

Belongs to the succinate/malate CoA ligase beta subunit family. In terms of assembly, heterotetramer of two alpha and two beta subunits. It depends on Mg(2+) as a cofactor.

It catalyses the reaction succinate + ATP + CoA = succinyl-CoA + ADP + phosphate. The catalysed reaction is GTP + succinate + CoA = succinyl-CoA + GDP + phosphate. Its pathway is carbohydrate metabolism; tricarboxylic acid cycle; succinate from succinyl-CoA (ligase route): step 1/1. Succinyl-CoA synthetase functions in the citric acid cycle (TCA), coupling the hydrolysis of succinyl-CoA to the synthesis of either ATP or GTP and thus represents the only step of substrate-level phosphorylation in the TCA. The beta subunit provides nucleotide specificity of the enzyme and binds the substrate succinate, while the binding sites for coenzyme A and phosphate are found in the alpha subunit. This chain is Succinate--CoA ligase [ADP-forming] subunit beta, found in Bartonella quintana (strain Toulouse) (Rochalimaea quintana).